The chain runs to 485 residues: UDP-N-acetylmuramate--L-alanine ligase (485 aa).

112–118 (GTHGKTT) serves as a coordination point for ATP.

It belongs to the MurCDEF family.

It localises to the cytoplasm. It carries out the reaction UDP-N-acetyl-alpha-D-muramate + L-alanine + ATP = UDP-N-acetyl-alpha-D-muramoyl-L-alanine + ADP + phosphate + H(+). It functions in the pathway cell wall biogenesis; peptidoglycan biosynthesis. In terms of biological role, cell wall formation. In Variovorax paradoxus (strain S110), this protein is UDP-N-acetylmuramate--L-alanine ligase.